The sequence spans 393 residues: Squamosa promoter-binding-like protein 11 (393 aa).

The tract at residues 74 to 96 (QSTSINSSSPEAKRCKLASESSP) is disordered. The SBP-type zinc-finger motif lies at 172 to 249 (VPRCQIDGCE…SHHNARRRKP (78 aa)). Positions 175, 180, 197, 200, 216, 219, 223, and 235 each coordinate Zn(2+). The Bipartite nuclear localization signal motif lies at 232–248 (KRSCRKRLSHHNARRRK).

It depends on Zn(2+) as a cofactor.

The protein resides in the nucleus. Functionally, trans-acting factor that binds specifically to the consensus nucleotide sequence 5'-TNCGTACAA-3'. This Arabidopsis thaliana (Mouse-ear cress) protein is Squamosa promoter-binding-like protein 11 (SPL11).